A 297-amino-acid chain; its full sequence is UDP-N-acetylglucosamine transporter TMEM241 (297 aa).

10 helical membrane-spanning segments follow: residues 7–29 (LLGL…VLSV), 32–52 (FTYP…LLHM), 69–89 (VLIW…GSKA), 93–113 (LAVP…CGYQ), 121–141 (TSLS…CLPF), 146–166 (FDPD…SYKI), 187–207 (IFSM…FGAL), 211–231 (FLYF…GFFL), 250–270 (WILC…DMAL), and 271–291 (TKAT…LVFS).

This sequence belongs to the nucleotide-sugar transporter family. SLC35A subfamily. In terms of tissue distribution, widely expressed with high expression in lung.

Its subcellular location is the golgi apparatus. It is found in the cis-Golgi network membrane. In terms of biological role, golgi-localized UDP-N-acetylglucosamine (UDP-GlcNAc) transporter that transports UDP-N-acetylglucosamine into Golgi lumen. Contributes to lysosomal targeting of NPC2, a key protein required for lysosomal cholesterol exiting, and that utilizes the mannose-6-phosphate (M6P) modification pathway for its lysosomal targeting. The sequence is that of UDP-N-acetylglucosamine transporter TMEM241 (Tmem241) from Mus musculus (Mouse).